The sequence spans 244 residues: 5-oxoprolinase subunit A (244 aa).

This sequence belongs to the LamB/PxpA family. As to quaternary structure, forms a complex composed of PxpA, PxpB and PxpC.

The catalysed reaction is 5-oxo-L-proline + ATP + 2 H2O = L-glutamate + ADP + phosphate + H(+). Catalyzes the cleavage of 5-oxoproline to form L-glutamate coupled to the hydrolysis of ATP to ADP and inorganic phosphate. This is 5-oxoprolinase subunit A from Escherichia coli O7:K1 (strain IAI39 / ExPEC).